The following is a 142-amino-acid chain: Large ribosomal subunit protein uL11 (142 aa).

It belongs to the universal ribosomal protein uL11 family. In terms of assembly, part of the ribosomal stalk of the 50S ribosomal subunit. Interacts with L10 and the large rRNA to form the base of the stalk. L10 forms an elongated spine to which L12 dimers bind in a sequential fashion forming a multimeric L10(L12)X complex. One or more lysine residues are methylated.

Functionally, forms part of the ribosomal stalk which helps the ribosome interact with GTP-bound translation factors. The polypeptide is Large ribosomal subunit protein uL11 (Tolumonas auensis (strain DSM 9187 / NBRC 110442 / TA 4)).